Consider the following 515-residue polypeptide: Leucine-rich repeat transmembrane neuronal protein 2 (515 aa).

The signal sequence occupies residues Met1–Ala33. In terms of domain architecture, LRRNT spans Cys34–Lys61. At Cys34–Arg421 the chain is on the extracellular side. Residue Asn57 is glycosylated (N-linked (GlcNAc...) asparagine). 10 LRR repeats span residues Ser63–Ser83, Gln86–Gly107, Lys110–Gln131, Asn134–Gly155, Lys158–Asp179, Ser182–Gly203, Lys206–Arg227, Ser230–Thr251, Thr254–Thr275, and Asn278–Ser299. Asn126 carries an N-linked (GlcNAc...) asparagine glycan. Asn243 carries an N-linked (GlcNAc...) asparagine glycan. In terms of domain architecture, LRRCT spans Asn311–Asn362. N-linked (GlcNAc...) asparagine glycosylation is present at Asn362. The chain crosses the membrane as a helical span at residues Val422–Ile442. At Ser443 to Val515 the chain is on the cytoplasmic side. The Involved in DLG4-binding motif lies at Glu512 to Val515.

Belongs to the LRRTM family. In terms of assembly, interacts with DLG4. Interacts with neurexin NRXN1; interaction is mediated by heparan sulfate glycan modification on neurexin. Expressed in neuronal tissues.

Its subcellular location is the cell membrane. It localises to the postsynaptic cell membrane. Functionally, involved in the development and maintenance of excitatory synapses in the vertebrate nervous system. Regulates surface expression of AMPA receptors and instructs the development of functional glutamate release sites. Acts as a ligand for the presynaptic receptors NRXN1-A and NRXN1-B. This Mus musculus (Mouse) protein is Leucine-rich repeat transmembrane neuronal protein 2 (Lrrtm2).